The following is a 734-amino-acid chain: Ribosomal RNA large subunit methyltransferase K/L (734 aa).

A THUMP domain is found at 43 to 154; the sequence is VGYRSCLWSR…RNQLTLSLDL (112 aa).

The protein belongs to the methyltransferase superfamily. RlmKL family.

It is found in the cytoplasm. It carries out the reaction guanosine(2445) in 23S rRNA + S-adenosyl-L-methionine = N(2)-methylguanosine(2445) in 23S rRNA + S-adenosyl-L-homocysteine + H(+). The catalysed reaction is guanosine(2069) in 23S rRNA + S-adenosyl-L-methionine = N(2)-methylguanosine(2069) in 23S rRNA + S-adenosyl-L-homocysteine + H(+). Functionally, specifically methylates the guanine in position 2445 (m2G2445) and the guanine in position 2069 (m7G2069) of 23S rRNA. In Hydrogenovibrio crunogenus (strain DSM 25203 / XCL-2) (Thiomicrospira crunogena), this protein is Ribosomal RNA large subunit methyltransferase K/L.